Reading from the N-terminus, the 204-residue chain is Phosphoribosyl-dephospho-CoA transferase (204 aa).

Residues Asp-129 and Asp-131 contribute to the active site.

It belongs to the MdcG family.

The catalysed reaction is apo-[malonate decarboxylase ACP] + 2'-(5''-triphospho-alpha-D-ribosyl)-3'-dephospho-CoA = holo-[malonate decarboxylase ACP] + diphosphate. Functionally, transfers 2'-(5-triphosphoribosyl)-3'-dephosphocoenzyme-A to the apo-[acyl-carrier-protein] of the malonate decarboxylase to yield holo-[acyl-carrier-protein]. In Pseudomonas putida (strain W619), this protein is Phosphoribosyl-dephospho-CoA transferase.